We begin with the raw amino-acid sequence, 252 residues long: MDKFAKRIIPCLDVNNGRVVKGINFVGLRDAGDPVEVAKRYNDEGADELCFLDITASSDGRDTIVHVVEEVARQLFIPLTVGGGIRKIDDISRLLNVGCDKVSLNSAAIHNPNLISEAANKFGSQCVVVAIDVKKVDGSYHVFINGGRVDTKIDAYEWAKKVYELGAGEILLTSMDSDGTKNGYDLEVTSKISNLVGIPVIASGGAGTMEHILEAFKFGADAALAASIFHYKEIEISELKKYLLANDIGVRI.

Catalysis depends on residues aspartate 13 and aspartate 132.

It belongs to the HisA/HisF family. As to quaternary structure, heterodimer of HisH and HisF.

The protein localises to the cytoplasm. It carries out the reaction 5-[(5-phospho-1-deoxy-D-ribulos-1-ylimino)methylamino]-1-(5-phospho-beta-D-ribosyl)imidazole-4-carboxamide + L-glutamine = D-erythro-1-(imidazol-4-yl)glycerol 3-phosphate + 5-amino-1-(5-phospho-beta-D-ribosyl)imidazole-4-carboxamide + L-glutamate + H(+). Its pathway is amino-acid biosynthesis; L-histidine biosynthesis; L-histidine from 5-phospho-alpha-D-ribose 1-diphosphate: step 5/9. Its function is as follows. IGPS catalyzes the conversion of PRFAR and glutamine to IGP, AICAR and glutamate. The HisF subunit catalyzes the cyclization activity that produces IGP and AICAR from PRFAR using the ammonia provided by the HisH subunit. This is Imidazole glycerol phosphate synthase subunit HisF from Campylobacter fetus subsp. fetus (strain 82-40).